Reading from the N-terminus, the 878-residue chain is Ecdysone receptor (878 aa).

2 disordered regions span residues 1-27 (MKRR…SSSN) and 209-254 (GLGM…SKKG). The modulating stretch occupies residues 1–263 (MKRRWSNNGG…GPAPRVQEEL (263 aa)). 2 NR C4-type zinc fingers span residues 264–284 (CLVC…CEGC) and 300–324 (CKFG…LKKC). The nuclear receptor DNA-binding region spans 264-336 (CLVCGDRASG…VGMRPECVVP (73 aa)). Positions 344 to 374 (RREKKAQKEKDKMTTSPSSQHGGNGSLASGG) are disordered. A compositionally biased stretch (gly residues) spans 365–374 (GGNGSLASGG). Residues 419–654 (NQLAVIYKLI…FLEEIWDVHA (236 aa)) enclose the NR LBD domain. Low complexity-rich tracts occupy residues 698 to 709 (TSAAAAAAQHQP) and 728 to 759 (QTQP…QLQP). The disordered stretch occupies residues 698-759 (TSAAAAAAQH…QPQLQTQLQP (62 aa)).

Belongs to the nuclear hormone receptor family. NR1 subfamily. As to quaternary structure, heterodimer of USP and ECR. Only the heterodimer is capable of high-affinity binding to ecdysone. Interacts with trr in an ecdysone-dependent manner. Upon ecdysone stimulation, interacts with Nup98. In terms of tissue distribution, isoform B1 predominates over isoform A in larval tissues, imaginal histoblast nests and midgut islands. Isoform A predominates over B1 in imaginal disks, and the larval prothoracic gland.

It is found in the nucleus. Its function is as follows. Receptor for ecdysone. Binds to ecdysone response elements (ECRES) following ecdysone-binding, and recruitment of a complex containing the histone methyltransferase trr, leads to activate transcription of target genes. The polypeptide is Ecdysone receptor (EcR) (Drosophila melanogaster (Fruit fly)).